The primary structure comprises 310 residues: MEDKIKHKLRIGWSYLLFLKQRVIHDRLTVSAGYMAYITLLSLVPLITVLLSVLSQFPVFSGAGETVQAFVIQNFVPAASDAVEASLKEFISNTGKMTAVGSGFLFVASVMLISSIDRSLNYIWRVKKKRRPMYSFSLYWMILTLGPLLVGASLAATSYVTSLKIMDDEIVSSFYRTLLGWLPIILSFSAFVGLYLLVPNKKVRVTHALIGAMSAGCLFEFSKVGFAQYITQFPSYQVIYGALAAVPILFVWVYLCWIIVLIGAEITASLGEFEGWLTGKVSVNILESDIKALTEQQGLIESDSTDPESK.

A run of 6 helical transmembrane segments spans residues 34–54 (YMAY…LSVL), 97–117 (MTAV…SSID), 136–156 (FSLY…SLAA), 178–198 (LLGW…YLLV), 207–227 (HALI…VGFA), and 242–262 (ALAA…IVLI).

It belongs to the UPF0761 family.

The protein resides in the cell inner membrane. This chain is UPF0761 membrane protein VF_0100, found in Aliivibrio fischeri (strain ATCC 700601 / ES114) (Vibrio fischeri).